The sequence spans 3225 residues: Intermembrane lipid transfer protein VPS13 (3225 aa).

The segment at 1–1390 (MLEGLVAGLL…VFAADVEQHT (1390 aa)) is involved in phospholipid binding. The Chorein N-terminal domain occupies 2–115 (LEGLVAGLLN…RHRLKMEKLD (114 aa)). 2 disordered regions span residues 1568–1610 (PEAP…QQLV) and 1768–1799 (AGLKHRTASGKGTSTLATRTRHASQSAASHSG). A compositionally biased stretch (low complexity) spans 1590–1610 (VRVGSSGRHSESSAGSGQQLV). Residues 1777–1799 (GKGTSTLATRTRHASQSAASHSG) show a composition bias toward polar residues. One can recognise an SHR-BD domain in the interval 2290–2570 (FKVTVYSPYV…PYAWDFPAAK (281 aa)).

Belongs to the VPS13 family.

The protein resides in the membrane. Its function is as follows. Mediates the transfer of lipids between membranes at organelle contact sites. Binds phospholipids, including phosphatidylcholine (PC), phosphatidylethanolamine (PE), phosphatidic acid (PA), and phosphatidylserine (PS). May play a role in mitochondrial lipid homeostasis, Golgi vesicle transport, reticulophagy, actin cytoskeleton organization and formation of the prospore membrane. The protein is Intermembrane lipid transfer protein VPS13 of Chaetomium thermophilum (strain DSM 1495 / CBS 144.50 / IMI 039719) (Thermochaetoides thermophila).